The primary structure comprises 328 residues: MTEAVEVRHDWTRSEIEALLDLPLMDLLWRAQGVHRASNPGYHVQLASLLSVKTGGCEEDCAYCPQSMHHSSDVTGQPELQVAPVLERAKAAKQAGADRFCMGWAWREIRDGAPFEAMLQMVSGVRALGMEACVTAGMLTDGQAQRLAKAGLTAYNHNLDTSPEHYDKIITTRTFQERLETLERVRQAGVTLCCGGIIGMGETIGDRASMLQVLASINPHPESVPINALVAVEGTPLEELPPIDPIELVRMIAVTRILMPGSRVRLSAGREQLSKEAQILCLQAGADSIFYGETLLTTGNPAVEADRELLRTAGVQANWLSASEKLAA.

The Radical SAM core domain maps to Tyr42 to Ser267. Cys57, Cys61, and Cys64 together coordinate [4Fe-4S] cluster. Positions 101, 133, 193, and 265 each coordinate [2Fe-2S] cluster.

This sequence belongs to the radical SAM superfamily. Biotin synthase family. In terms of assembly, homodimer. The cofactor is [4Fe-4S] cluster. Requires [2Fe-2S] cluster as cofactor.

The catalysed reaction is (4R,5S)-dethiobiotin + (sulfur carrier)-SH + 2 reduced [2Fe-2S]-[ferredoxin] + 2 S-adenosyl-L-methionine = (sulfur carrier)-H + biotin + 2 5'-deoxyadenosine + 2 L-methionine + 2 oxidized [2Fe-2S]-[ferredoxin]. The protein operates within cofactor biosynthesis; biotin biosynthesis; biotin from 7,8-diaminononanoate: step 2/2. Catalyzes the conversion of dethiobiotin (DTB) to biotin by the insertion of a sulfur atom into dethiobiotin via a radical-based mechanism. The protein is Biotin synthase of Synechococcus sp. (strain CC9311).